A 279-amino-acid chain; its full sequence is tRNA pseudouridine synthase A (279 aa).

Asp-54 functions as the Nucleophile in the catalytic mechanism. Residue Tyr-112 coordinates substrate.

This sequence belongs to the tRNA pseudouridine synthase TruA family. As to quaternary structure, homodimer.

It carries out the reaction uridine(38/39/40) in tRNA = pseudouridine(38/39/40) in tRNA. Its function is as follows. Formation of pseudouridine at positions 38, 39 and 40 in the anticodon stem and loop of transfer RNAs. The chain is tRNA pseudouridine synthase A from Cutibacterium acnes (strain DSM 16379 / KPA171202) (Propionibacterium acnes).